Consider the following 253-residue polypeptide: Proteasome subunit alpha (253 aa).

Positions 232–242 (AAGASTAGEAG) are enriched in low complexity. Positions 232–253 (AAGASTAGEAGSAEDEGSDDEK) are disordered. The segment covering 243–253 (SAEDEGSDDEK) has biased composition (acidic residues).

It belongs to the peptidase T1A family. As to quaternary structure, the 20S proteasome core is composed of 14 alpha and 14 beta subunits that assemble into four stacked heptameric rings, resulting in a barrel-shaped structure. The two inner rings, each composed of seven catalytic beta subunits, are sandwiched by two outer rings, each composed of seven alpha subunits. The catalytic chamber with the active sites is on the inside of the barrel. Has a gated structure, the ends of the cylinder being occluded by the N-termini of the alpha-subunits. Is capped by the proteasome-associated ATPase, ARC.

Its subcellular location is the cytoplasm. The protein operates within protein degradation; proteasomal Pup-dependent pathway. The formation of the proteasomal ATPase ARC-20S proteasome complex, likely via the docking of the C-termini of ARC into the intersubunit pockets in the alpha-rings, may trigger opening of the gate for substrate entry. Interconversion between the open-gate and close-gate conformations leads to a dynamic regulation of the 20S proteasome proteolysis activity. In terms of biological role, component of the proteasome core, a large protease complex with broad specificity involved in protein degradation. This is Proteasome subunit alpha from Streptomyces avermitilis (strain ATCC 31267 / DSM 46492 / JCM 5070 / NBRC 14893 / NCIMB 12804 / NRRL 8165 / MA-4680).